Reading from the N-terminus, the 465-residue chain is Adenosine 3'-phospho 5'-phosphosulfate transporter 1 (465 aa).

10 helical membrane passes run 13 to 33, 61 to 81, 142 to 162, 185 to 205, 270 to 290, 299 to 319, 339 to 359, 370 to 390, 391 to 407, and 424 to 444; these read LVIC…SDLL, FLKL…GFLI, AVQL…WGVL, QFLV…YLQW, SYEY…MSGS, VTTL…SFTA, GVNL…GGFM, KFVF…LFIY, HTID…IMTL, and ISLL…LRVY.

The protein belongs to the nucleotide-sugar transporter family. SLC35B subfamily. As to expression, expressed throughout embryogenesis. During oogenesis, it is expressed strongly in the nurse cells of the germline. Maternally expressed at the syncytial blastoderm stage. Zygotically expressed, from after germ-band elongation in the invaginating salivary gland placodes. Remains expressed predominantly in this tissue throughout embryogenesis, but low-level expression may also be present throughout the embryo.

The protein localises to the golgi apparatus membrane. Its function is as follows. Mediates the transport of adenosine 3'-phospho 5'-phosphosulfate (PAPS), from cytosol into Golgi. PAPS is a universal sulfuryl donor for sulfation events that take place in the Golgi. Required for the dorsoventral patterning, suggesting that it mediates the transport of the sulfate donor required for the sulfotransferase activity of pip (pipe). The chain is Adenosine 3'-phospho 5'-phosphosulfate transporter 1 (sll) from Drosophila melanogaster (Fruit fly).